Here is a 534-residue protein sequence, read N- to C-terminus: CTP synthase (534 aa).

Residues 1-265 form an amidoligase domain region; the sequence is MKYIVVTGGV…TTRLMKHLKL (265 aa). Ser-12 provides a ligand contact to CTP. Ser-12 contacts UTP. 13 to 18 is a binding site for ATP; it reads GLGKGI. L-glutamine is bound at residue Tyr-53. Residue Asp-70 participates in ATP binding. Mg(2+)-binding residues include Asp-70 and Glu-140. CTP-binding positions include 147-149, 186-191, and Lys-222; these read DIE and KTKPSQ. Residues 186–191 and Lys-222 each bind UTP; that span reads KTKPSQ. One can recognise a Glutamine amidotransferase type-1 domain in the interval 289–530; that stretch reads KLAIVGKYTN…VRAMCKYNKE (242 aa). Gly-352 lines the L-glutamine pocket. Cys-379 acts as the Nucleophile; for glutamine hydrolysis in catalysis. Residues 380–383, Glu-403, and Arg-460 each bind L-glutamine; that span reads LGMQ. Residues His-503 and Glu-505 contribute to the active site.

This sequence belongs to the CTP synthase family. In terms of assembly, homotetramer.

It carries out the reaction UTP + L-glutamine + ATP + H2O = CTP + L-glutamate + ADP + phosphate + 2 H(+). The enzyme catalyses L-glutamine + H2O = L-glutamate + NH4(+). The catalysed reaction is UTP + NH4(+) + ATP = CTP + ADP + phosphate + 2 H(+). Its pathway is pyrimidine metabolism; CTP biosynthesis via de novo pathway; CTP from UDP: step 2/2. Allosterically activated by GTP, when glutamine is the substrate; GTP has no effect on the reaction when ammonia is the substrate. The allosteric effector GTP functions by stabilizing the protein conformation that binds the tetrahedral intermediate(s) formed during glutamine hydrolysis. Inhibited by the product CTP, via allosteric rather than competitive inhibition. Functionally, catalyzes the ATP-dependent amination of UTP to CTP with either L-glutamine or ammonia as the source of nitrogen. Regulates intracellular CTP levels through interactions with the four ribonucleotide triphosphates. The polypeptide is CTP synthase (Methanosarcina acetivorans (strain ATCC 35395 / DSM 2834 / JCM 12185 / C2A)).